Reading from the N-terminus, the 752-residue chain is Probable beta-glucosidase D (752 aa).

Residues 1–18 (MRFVSLAVGAALLGAAGA) form the signal peptide. Residues asparagine 187 and asparagine 237 are each glycosylated (N-linked (GlcNAc...) asparagine). Residue aspartate 265 is part of the active site. 10 N-linked (GlcNAc...) asparagine glycosylation sites follow: asparagine 299, asparagine 343, asparagine 441, asparagine 510, asparagine 532, asparagine 571, asparagine 586, asparagine 638, asparagine 661, and asparagine 743.

Belongs to the glycosyl hydrolase 3 family.

The protein resides in the secreted. It catalyses the reaction Hydrolysis of terminal, non-reducing beta-D-glucosyl residues with release of beta-D-glucose.. It functions in the pathway glycan metabolism; cellulose degradation. Functionally, beta-glucosidases are one of a number of cellulolytic enzymes involved in the degradation of cellulosic biomass. Catalyzes the last step releasing glucose from the inhibitory cellobiose. The chain is Probable beta-glucosidase D (bglD) from Aspergillus oryzae (strain ATCC 42149 / RIB 40) (Yellow koji mold).